The sequence spans 492 residues: Trigger factor (492 aa).

Residues 169 to 254 enclose the PPIase FKBP-type domain; it reads GDRVSIDYVG…VKEVSKPGEL (86 aa). The tract at residues 441 to 492 is disordered; the sequence is LMADDEDAETTTKAKPAKKAAAKKAEAKANEDEAEEPKKKAAPKKKAAKDAE. Residues 463–479 are compositionally biased toward basic and acidic residues; that stretch reads KKAEAKANEDEAEEPKK. Residues 480-492 are compositionally biased toward basic residues; the sequence is KAAPKKKAAKDAE.

The protein belongs to the FKBP-type PPIase family. Tig subfamily.

The protein localises to the cytoplasm. The catalysed reaction is [protein]-peptidylproline (omega=180) = [protein]-peptidylproline (omega=0). Its function is as follows. Involved in protein export. Acts as a chaperone by maintaining the newly synthesized protein in an open conformation. Functions as a peptidyl-prolyl cis-trans isomerase. The chain is Trigger factor from Mesorhizobium japonicum (strain LMG 29417 / CECT 9101 / MAFF 303099) (Mesorhizobium loti (strain MAFF 303099)).